A 351-amino-acid chain; its full sequence is Ubiquinol oxidase 4, chloroplastic/chromoplastic (351 aa).

The N-terminal 56 residues, M1 to Q56, are a transit peptide targeting the chloroplast and chromoplast. Positions E71–S91 are disordered. The helical transmembrane segment at F132–M152 threads the bilayer. Positions 136, 175, and 178 each coordinate Fe cation. Residues F195–S215 traverse the membrane as a helical segment. E227, E296, and H299 together coordinate Fe cation.

The protein belongs to the alternative oxidase family. The cofactor is Fe cation. As to expression, ubiquitous.

It localises to the plastid. The protein resides in the chloroplast thylakoid membrane. The protein localises to the chromoplast membrane. It carries out the reaction 2 a ubiquinol + O2 = 2 a ubiquinone + 2 H2O. Functionally, acts early in chloroplast biogenesis as a component of a redox chain responsible for phytoene desaturation. Prevents the generation of toxic oxygen radicals and photooxidation of the nascent photosynthetic apparatus. Involved in the differentiation of multiple plastid types, including chloroplasts, amyloplasts, and etioplasts. Might participate in the chloroplast respiratory chain. In Arabidopsis thaliana (Mouse-ear cress), this protein is Ubiquinol oxidase 4, chloroplastic/chromoplastic (AOX4).